The following is a 477-amino-acid chain: Protein DETOXIFICATION 5 (477 aa).

A run of 12 helical transmembrane segments spans residues 38–58 (AAPM…SVMV), 72–92 (LATA…VGAL), 113–133 (FSAI…WFYM), 146–166 (ISKV…AQAV), 187–207 (AITT…AFGL), 211–231 (GAAL…ALYV), 263–283 (AAMT…SGLL), 292–312 (VLSI…GIGA), 333–353 (AVFA…TLLF), 376–396 (LSSL…LDGV), 411–431 (VVAY…WGHM), and 436–456 (LWIG…IVTA).

The protein belongs to the multi antimicrobial extrusion (MATE) (TC 2.A.66.1) family.

The protein resides in the membrane. The sequence is that of Protein DETOXIFICATION 5 from Arabidopsis thaliana (Mouse-ear cress).